Consider the following 111-residue polypeptide: Translation initiation factor 1A 1 (111 aa).

Residues 1 to 26 are disordered; the sequence is MTLADLKKPTSRATPSTEETFTRVRT. Residues 22–96 enclose the S1-like domain; the sequence is TRVRTPRREN…EKADVIWKYT (75 aa).

This sequence belongs to the eIF-1A family.

Its function is as follows. Seems to be required for maximal rate of protein biosynthesis. Enhances ribosome dissociation into subunits and stabilizes the binding of the initiator Met-tRNA(I) to 40 S ribosomal subunits. This is Translation initiation factor 1A 1 (eIF1A1) from Methanosarcina acetivorans (strain ATCC 35395 / DSM 2834 / JCM 12185 / C2A).